The sequence spans 2415 residues: Bradyzoite-formation deficient protein 1 (2415 aa).

Disordered regions lie at residues 369–392, 418–481, and 761–845; these read WNKPEAARQEYHRASASARGPEET, HLTS…PYTR, and DGCG…QDTQ. Positions 419-429 are enriched in basic residues; the sequence is LTSRQHPNPRP. Residues 430 to 443 show a composition bias toward basic and acidic residues; sequence RMKEEHCGREREVL. Composition is skewed to polar residues over residues 444–460 and 832–843; these read SSEQPSDCGETQKTPAS and PRTTSSSSYGQD. The Myb-like domain occupies 921–968; the sequence is WSAEEDASLAELVSRKGFKWALISSQLTGAFGIPRTGKQCRERWFNHV. One can recognise an HTH myb-type domain in the interval 969–1023; the sequence is NPEVKKGDWSAEEDAMILMLQNELGNRWATIAKKLRGRTENAVKNRFISLSNARL. Positions 996–1019 form a DNA-binding region, H-T-H motif; that stretch reads WATIAKKLRGRTENAVKNRFISLS. Disordered regions lie at residues 1027–1050, 1098–1127, 1206–1270, 1319–1343, 1501–1521, 1905–1932, 1959–2013, and 2161–2222; these read RPKRDGSSADCFSNRRTGSGKSSG, VSRPRQCTGTSPSCGHPSAGEGDPSHLKNT, NDER…NGLD, PACDHRGAPQNSVESGEQSPDAQRQ, QLWTSQETESDTNPSPNQQHE, VSRDKQREPPKNGLTGCDVPEYLGTSQS, RVRW…GSTA, and GTDA…EMQD. Residues 1036–1050 are compositionally biased toward polar residues; the sequence is DCFSNRRTGSGKSSG. Over residues 1227–1237 the composition is skewed to basic and acidic residues; it reads AHEHADIARSD. Composition is skewed to polar residues over residues 1327-1343 and 1501-1520; these read PQNSVESGEQSPDAQRQ and QLWTSQETESDTNPSPNQQH. Residues 1974-1985 show a composition bias toward polar residues; sequence SVSSGASNSATT. Residues 2181-2197 are compositionally biased toward basic and acidic residues; the sequence is QAHRRDGHDMQRVQRCD.

It is found in the nucleus. Master transcription factor that controls the differentiation of acute-stage tachyzoite parasites into chronic-stage bradyzoites, which form intracellular cysts resistant to immune clearance and existing therapies. Sufficient to drive differentiation into bradyzoite stage. Following translation in response to stress conditions, binds to the promoter of many chronic stage-specific genes and promotes their expression, thereby driving differentiation into bradyzoites. In Toxoplasma gondii (strain ATCC 50611 / Me49), this protein is Bradyzoite-formation deficient protein 1.